A 98-amino-acid chain; its full sequence is U-megalopygitoxin(1)-Mo1 (98 aa).

The N-terminal stretch at 1-17 (MYRETFVFCVLLAVVSA) is a signal peptide.

The protein belongs to the caterpillar 1 family. Contains 4 disulfide bonds. In terms of tissue distribution, expressed by the venom apparatus.

It is found in the secreted. Its function is as follows. Probable toxin. This is U-megalopygitoxin(1)-Mo1 from Megalopyge opercularis (Southern flannel moth).